The following is a 601-amino-acid chain: 3-hydroxy-3-methylglutaryl-coenzyme A reductase (601 aa).

The interval 1–34 is disordered; that stretch reads MDSRRRSPTVTAKAAAGELPLAPHEGQNQQPSIP. 2 consecutive transmembrane segments (helical) span residues 36–58 and 86–106; these read SSDVLPLPLYLANGVFFTLFFSV and ALASLIASVIYLVSFFGLDFV. The linker stretch occupies residues 107 to 179; that stretch reads QSLIYKPNNE…PLITPQNSEE (73 aa). The interval 180–601 is catalytic; that stretch reads DEDIIKAVVA…IASSQLESDS (422 aa). The active-site Charge relay system is Glu-273. The N-linked (GlcNAc...) asparagine glycan is linked to Asn-337. Active-site charge relay system residues include Lys-405 and Asp-481. His-579 acts as the Proton donor in catalysis. An N-linked (GlcNAc...) asparagine glycan is attached at Asn-583.

The protein belongs to the HMG-CoA reductase family.

It is found in the endoplasmic reticulum membrane. It carries out the reaction (R)-mevalonate + 2 NADP(+) + CoA = (3S)-3-hydroxy-3-methylglutaryl-CoA + 2 NADPH + 2 H(+). It participates in metabolic intermediate biosynthesis; (R)-mevalonate biosynthesis; (R)-mevalonate from acetyl-CoA: step 3/3. Catalyzes the synthesis of mevalonate. The specific precursor of all isoprenoid compounds present in plants. This chain is 3-hydroxy-3-methylglutaryl-coenzyme A reductase (HMGR), found in Catharanthus roseus (Madagascar periwinkle).